Reading from the N-terminus, the 138-residue chain is Large-conductance mechanosensitive channel (138 aa).

Helical transmembrane passes span 19 to 39 (VGVI…GDII), 40 to 60 (MPII…IPLA), and 81 to 101 (GSFL…FMVI).

This sequence belongs to the MscL family. In terms of assembly, homopentamer.

It is found in the cell inner membrane. Channel that opens in response to stretch forces in the membrane lipid bilayer. May participate in the regulation of osmotic pressure changes within the cell. The sequence is that of Large-conductance mechanosensitive channel from Bradyrhizobium sp. (strain ORS 278).